Here is a 427-residue protein sequence, read N- to C-terminus: Indole diterpene prenyltransferase penD (427 aa).

77 to 78 (YV) provides a ligand contact to L-tryptophan. Residues arginine 99, lysine 186, tyrosine 188, arginine 259, lysine 261, tyrosine 263, tyrosine 344, tyrosine 409, and tyrosine 413 each contribute to the substrate site.

Belongs to the tryptophan dimethylallyltransferase family.

It functions in the pathway secondary metabolite biosynthesis. Its function is as follows. Indole diterpene prenyltransferase; part of the gene cluster that mediates the biosynthesis of the indole diterpenes penitrems. The geranylgeranyl diphosphate (GGPP) synthase penG catalyzes the first step in penitrem biosynthesis via conversion of farnesyl pyrophosphate and isopentyl pyrophosphate into geranylgeranyl pyrophosphate (GGPP). Condensation of indole-3-glycerol phosphate with GGPP by the prenyl transferase penC then forms 3-geranylgeranylindole (3-GGI). Epoxidation by the FAD-dependent monooxygenase penM leads to a epoxidized-GGI that is substrate of the terpene cyclase penB for cyclization to yield paspaline. Paspaline is subsequently converted to 13-desoxypaxilline by the cytochrome P450 monooxygenase penP, the latter being then converted to paxilline by the cytochrome P450 monooxygenase penQ. Paxilline is converted to beta-paxitriol via C-10 ketoreduction by the short-chain dehydrogenase PC-15 which can be monoprenylated at the C-20 by the indole diterpene prenyltransferase penD. A two-step elimination (acetylation and elimination) process performed by the O-acetyltransferase PC-16 and the P.simplicissimum ptmI-ortholog not yet identified in P.crustosum, leads to the production of the prenylated form of penijanthine. The FAD-linked oxidoreductase ptmO then converts the prenylated form of penijanthine into PC-M5 which is in turn transformed into PC-M4 by the aromatic dimethylallyltransferase PC-22. A series of oxidation steps involving 4 cytochrome P450 monooxygenases (PC-21, PC-05, PC-23, PC-20) and a FAD-dependent monooxygenase (PC-14) are required for the transformation of PC-M4 to penitrems A and E. Synthesis of these final products is proposed to proceed via penitrems D and C (PC-21, PC-05, PC-14) and penitrems B and F (PC-21, PC-05, PC-14, PC-23). This Penicillium crustosum (Blue mold fungus) protein is Indole diterpene prenyltransferase penD.